Reading from the N-terminus, the 515-residue chain is Sphingolipid 10-desaturase (515 aa).

Residues 3–23 (AVWALLWALQLGTLVGCALVL) form a helical membrane-spanning segment. A Cytochrome b5 heme-binding domain is found at 46 to 113 (AKPISDQKAA…DISFVFRVMH (68 aa)). Heme contacts are provided by His-90 and His-113. The helical transmembrane segment at 198–218 (TWLLWNTAVLISIIALSVISM) threads the bilayer. The Histidine box-1 motif lies at 245–249 (HDAEH). The helical transmembrane segment at 258-278 (LNDILGWIYGTVFLGVNGAWW) threads the bilayer. The Histidine box-2 motif lies at 281-286 (EHREHH). A run of 3 helical transmembrane segments spans residues 322-342 (IIHF…FIVG), 359-379 (PWTI…LSQT), and 382-402 (PIPV…QLLG). The short motif at 447 to 451 (HYSHH) is the Histidine box-3 element.

The protein belongs to the fatty acid desaturase type 1 family. Fe(2+) serves as cofactor.

The protein resides in the membrane. It carries out the reaction a (4E,8E)-4-sphinga-4,8-dienine ceramide + 2 Fe(II)-[cytochrome b5] + O2 + 2 H(+) = an N-acyl-(4E,8E,10E)-sphingatrienine + 2 Fe(III)-[cytochrome b5] + 2 H2O. It functions in the pathway lipid metabolism; sphingolipid metabolism. In terms of biological role, fatty acid desaturase that catalyzes the introduction of the third double bond at the Delta(10) position in d18:3Delta4,8,10 triunsaturated sphingolipid long fatty acid chains. The cytochrome b5 domain probably acts as the direct electron donor to the active site of the desaturase. The chain is Sphingolipid 10-desaturase from Thalassiosira pseudonana (Marine diatom).